The chain runs to 257 residues: Ribosome-associated protein quality control protein P2 (257 aa).

Residues 1 to 74 are N-terminal domain; it reads MSDIYQHFRK…RAERKRAILF (74 aa). A central region region spans residues 87–166; sequence LQAFNVRYAD…EKIDLSDLNI (80 aa). The 71-residue stretch at 181 to 251 folds into the S4 RNA-binding domain; sequence LRLDAVCASM…GKTKKDKWRV (71 aa).

In the presence of chloramphenicol (a translation elongation inhibitor), but not erythromycin or lincomycin, associates with 50S ribosomal subunits with or without a tRNA in the P-site. The S4 domain binds in a similar position to RqcP.

The protein resides in the cytoplasm. Part of the ribosome quality control system (RQC), a ribosome-associated complex that mediates the extraction of incompletely synthesized nascent chains from stalled ribosomes and their subsequent degradation. RqcH recruits Ala-charged tRNA, and with RqcP directs the elongation of stalled nascent chains on 50S ribosomal subunits, leading to non-templated C-terminal alanine extensions (Ala tail). The Ala tail promotes nascent chain degradation. RqcP2 (YlmH) overexpression can compensate for RqcP's role in Ala tailing during RQC, restoring Ala tail addition to peptides in stalled ribosomes. Overexpression complements a double ssrA-rqcP double deletion, but not an ssrA-rqcH double deletion. Its function is as follows. The majority of tagged protein is associated with tRNA-less 50S subunits, suggesting it might also play a role in late stage 50S subunit biogenesis. This Bacillus subtilis (strain 168) protein is Ribosome-associated protein quality control protein P2.